The following is a 602-amino-acid chain: Alpha-glucosides permease MPH3 (602 aa).

Residues 1 to 106 lie on the Cytoplasmic side of the membrane; sequence MKNLSFLINR…AAAWSLLVST (106 aa). The chain crosses the membrane as a helical span at residues 107 to 127; the sequence is TLIMEGYDTAILGAFYALPIF. Topologically, residues 128 to 142 are extracellular; that stretch reads QRKFGSQNDKTGEWE. A helical membrane pass occupies residues 143-163; sequence ISASWQIGLTLCYMAGEIVGL. Residues 164–178 are Cytoplasmic-facing; it reads QLTGPSVDLVGNRYT. A helical membrane pass occupies residues 179–199; the sequence is LIIALFFLAAFTFILYFCNSL. Residue Gly-200 is a topological domain, extracellular. Residues 201–221 form a helical membrane-spanning segment; the sequence is MIAVGQALCGMPWGCFQCLTV. Residues 222-234 are Cytoplasmic-facing; the sequence is SYASEICPLALRY. A helical membrane pass occupies residues 235-255; that stretch reads YLTTYSNLCWLFGQLFAAGIM. Residues 256–270 are Extracellular-facing; the sequence is KNSQKKYADSELGYK. The chain crosses the membrane as a helical span at residues 271–291; sequence LPFALQWILPVPLALGIFFAP. The Cytoplasmic segment spans residues 292-363; it reads ESPWWLVKKG…EDKINRRRTR (72 aa). A helical transmembrane segment spans residues 364 to 384; sequence ITCLCWAGQATCGSILIGYST. The Extracellular portion of the chain corresponds to 385 to 397; that stretch reads YFYEKAGVSTEMS. The chain crosses the membrane as a helical span at residues 398–418; sequence FTFSIIQYCLGICATFLSWWA. The Cytoplasmic portion of the chain corresponds to 419–426; sequence SKYFGRYD. The chain crosses the membrane as a helical span at residues 427–447; that stretch reads LYAFGLAFQTIVFFIIGGLGC. Over 448–459 the chain is Extracellular; sequence SSTHGSKMGSGS. The chain crosses the membrane as a helical span at residues 460–480; it reads LLMAVAFFYNLGIAPVVFCLV. Over 481–492 the chain is Cytoplasmic; the sequence is SEMPSSRLRTKT. The helical transmembrane segment at 493–513 threads the bilayer; the sequence is IILARNTYNVVSIICSVLILY. The Extracellular segment spans residues 514–525; the sequence is QLNSKKWNWGAK. The chain crosses the membrane as a helical span at residues 526-546; sequence SGFFWGVLCFCTLIWAVVDLP. At 547–602 the chain is on the cytoplasmic side; sequence ETAGKTFVEINELFKLGVSARKFKSTKVDPFVVKNPPKDVSHNDPKGDIEASIAEE. Residues 580–602 are disordered; that stretch reads KNPPKDVSHNDPKGDIEASIAEE. Residues 582 to 595 are compositionally biased toward basic and acidic residues; sequence PPKDVSHNDPKGDI.

It belongs to the major facilitator superfamily. Sugar transporter (TC 2.A.1.1) family.

The protein localises to the cell membrane. Functionally, high-affinity uptake of maltose and maltotriose. Also transports alpha-methylglucoside, glucose and turanose but not melezitose or trehalose. This Saccharomyces cerevisiae (strain AWRI1631) (Baker's yeast) protein is Alpha-glucosides permease MPH3 (MPH3).